The sequence spans 138 residues: ATP synthase epsilon chain (138 aa).

The protein belongs to the ATPase epsilon chain family. In terms of assembly, F-type ATPases have 2 components, CF(1) - the catalytic core - and CF(0) - the membrane proton channel. CF(1) has five subunits: alpha(3), beta(3), gamma(1), delta(1), epsilon(1). CF(0) has three main subunits: a, b and c.

The protein resides in the cell inner membrane. Produces ATP from ADP in the presence of a proton gradient across the membrane. This chain is ATP synthase epsilon chain, found in Psychrobacter cryohalolentis (strain ATCC BAA-1226 / DSM 17306 / VKM B-2378 / K5).